Here is a 192-residue protein sequence, read N- to C-terminus: uncharacterized protein (192 aa).

The B12-binding domain maps to 72–192; the sequence is GATVLLIVPP…SLVISEFSLV (121 aa).

This is an uncharacterized protein from Rhodobacter capsulatus (Rhodopseudomonas capsulata).